Reading from the N-terminus, the 558-residue chain is Eukaryotic translation initiation factor 3 subunit D (558 aa).

Residues 296–310 are RNA gate; it reads EFDLLTVNETSVEPP. Positions 534 to 558 are disordered; it reads DNTFESEGEEEDSDEEEQVKDAFQR. Residues 537–551 are compositionally biased toward acidic residues; it reads FESEGEEEDSDEEEQ.

It belongs to the eIF-3 subunit D family. Component of the eukaryotic translation initiation factor 3 (eIF-3) complex.

It localises to the cytoplasm. MRNA cap-binding component of the eukaryotic translation initiation factor 3 (eIF-3) complex, which is involved in protein synthesis of a specialized repertoire of mRNAs and, together with other initiation factors, stimulates binding of mRNA and methionyl-tRNAi to the 40S ribosome. The eIF-3 complex specifically targets and initiates translation of a subset of mRNAs involved in cell proliferation. In the eIF-3 complex, eif3d specifically recognizes and binds the 7-methylguanosine cap of a subset of mRNAs. The polypeptide is Eukaryotic translation initiation factor 3 subunit D (Nasonia vitripennis (Parasitic wasp)).